A 530-amino-acid polypeptide reads, in one-letter code: uncharacterized protein (530 aa).

The protein belongs to the protein kinase superfamily. ADCK protein kinase family.

This is an uncharacterized protein from Clostridium pasteurianum.